Consider the following 152-residue polypeptide: Protein-export protein SecB (152 aa).

It belongs to the SecB family. As to quaternary structure, homotetramer, a dimer of dimers. One homotetramer interacts with 1 SecA dimer.

The protein localises to the cytoplasm. Functionally, one of the proteins required for the normal export of preproteins out of the cell cytoplasm. It is a molecular chaperone that binds to a subset of precursor proteins, maintaining them in a translocation-competent state. It also specifically binds to its receptor SecA. This is Protein-export protein SecB from Rickettsia massiliae (strain Mtu5).